A 415-amino-acid polypeptide reads, in one-letter code: Mannosylglycerate hydrolase (415 aa).

Residues Tyr23, 27–30 (WLWD), Tyr76, Gln98, and Gly158 each bind substrate. Catalysis depends on Asp160, which acts as the Proton donor. Substrate contacts are provided by residues Arg193 and 344–345 (YW). The Proton acceptor role is filled by Glu388.

The protein belongs to the glycosyl hydrolase 63 family. In terms of assembly, homotetramer in solution.

The catalysed reaction is (2R)-2-O-(alpha-D-mannosyl)-glycerate + H2O = D-mannose + (R)-glycerate. It carries out the reaction (2R)-2-O-(alpha-D-glucopyranosyl)-glycerate + H2O = (R)-glycerate + D-glucose. With respect to regulation, activity is not stimulated by divalent cations and not affected in the presence of EDTA. In terms of biological role, hydrolase that catalyzes the hydrolysis of mannosylglycerate (MG), a solute produced in response to osmotic stress in thermophiles, into mannose and glycerate. Can also hydrolyze glucosylglycerate (GG) to glucose and glycerate, with similar catalytic efficiency. Is highly specific for MG and GG, and cannot use mannosylglyceramide (MGA), glucosylglycerol, mannosylglucosylglycerate (MGG), glucosylglucosylglycerate (GGG) or trehalose as substrates. This chain is Mannosylglycerate hydrolase, found in Thermus thermophilus (strain ATCC BAA-163 / DSM 7039 / HB27).